Here is a 228-residue protein sequence, read N- to C-terminus: Auxin-responsive protein IAA14 (228 aa).

The EAR-like (transcriptional repression) signature appears at 8 to 12 (LCLGL). Residues 110–210 (VAFVKVSMDG…SCKRLRIMKG (101 aa)) enclose the PB1 domain.

Belongs to the Aux/IAA family. As to quaternary structure, homodimers and heterodimers. Interacts with TPL. As to expression, preferentially expressed in roots and flowers.

It localises to the nucleus. Its function is as follows. Aux/IAA proteins are short-lived transcriptional factors that function as repressors of early auxin response genes at low auxin concentrations. Repression is thought to result from the interaction with auxin response factors (ARFs), proteins that bind to the auxin-responsive promoter element (AuxRE). Formation of heterodimers with ARF proteins may alter their ability to modulate early auxin response genes expression. The polypeptide is Auxin-responsive protein IAA14 (IAA14) (Arabidopsis thaliana (Mouse-ear cress)).